A 598-amino-acid chain; its full sequence is Serine hydroxymethyltransferase 7 (598 aa).

The tract at residues 57–85 is disordered; sequence QLLEQKAEKTTTVDEPKKDGGGGGDQKED. Positions 61-85 are enriched in basic and acidic residues; sequence QKAEKTTTVDEPKKDGGGGGDQKED. N6-(pyridoxal phosphate)lysine is present on lysine 370.

It belongs to the SHMT family. As to quaternary structure, homotetramer. Requires pyridoxal 5'-phosphate as cofactor.

It localises to the cytoplasm. It carries out the reaction (6R)-5,10-methylene-5,6,7,8-tetrahydrofolate + glycine + H2O = (6S)-5,6,7,8-tetrahydrofolate + L-serine. It participates in one-carbon metabolism; tetrahydrofolate interconversion. Its function is as follows. Catalyzes the interconversion of serine and glycine. In Arabidopsis thaliana (Mouse-ear cress), this protein is Serine hydroxymethyltransferase 7 (SHM7).